The sequence spans 181 residues: Probable GTP-binding protein EngB (181 aa).

In terms of domain architecture, EngB-type G spans Pro18–Asn181. GTP-binding positions include Gly26–Ser33, Gly52–Leu56, Asp70–Gly73, Thr137–Asp140, and Val164–Ile166. Ser33 and Thr54 together coordinate Mg(2+).

The protein belongs to the TRAFAC class TrmE-Era-EngA-EngB-Septin-like GTPase superfamily. EngB GTPase family. The cofactor is Mg(2+).

Necessary for normal cell division and for the maintenance of normal septation. This Mycoplasma mobile (strain ATCC 43663 / 163K / NCTC 11711) (Mesomycoplasma mobile) protein is Probable GTP-binding protein EngB.